The primary structure comprises 1526 residues: Myosin type-2 heavy chain 1 (1526 aa).

The Myosin N-terminal SH3-like domain occupies 22 to 73 (DDKRWVWISDPETAFTKAWIKEDLPDKKYVVRYNNSRDEKIVGEDEIDPVNP). A Myosin motor domain is found at 77-755 (DRVNDMAELT…VLAELEERRV (679 aa)). 170-177 (GESGAGKT) is an ATP binding site. Actin-binding regions lie at residues 634-656 (LNQL…VPNE) and 734-748 (RIGV…GVLA). The 30-residue stretch at 758–787 (LQRLMTMLQTRIRGFLQRKIFQKRLKDIQA) folds into the IQ domain. Positions 875-1244 (ALDKEEILRR…SLTKQVNELS (370 aa)) form a coiled coil. Ser1044 carries the post-translational modification Phosphoserine.

It belongs to the TRAFAC class myosin-kinesin ATPase superfamily. Myosin family. As to quaternary structure, binds to cdc4 and rlc1.

Functionally, required for cell division. It is a component of the cdc12 'spot', a structure thought to mark the site of septation. May work in conjunction with myo3. The polypeptide is Myosin type-2 heavy chain 1 (myo2) (Schizosaccharomyces pombe (strain 972 / ATCC 24843) (Fission yeast)).